The sequence spans 443 residues: C4-dicarboxylate transport protein (443 aa).

9 consecutive transmembrane segments (helical) span residues 10–30, 46–66, 78–98, 143–163, 199–219, 224–244, 291–311, 332–352, and 354–374; these read SLYFQVIVAIVIGILLGHFYP, LIKMVIAPIIFCTVVSGIAGM, YALLYFEIVSTVALLIGLIVV, IVGAFANGDILQVLMFSVIFG, PIGALGAMAFTIGAYGVGSLV, LMICFYITCLLFVLVVLGGIC, VVGLVIPTGYSFNLDGTSIYL, ITLLLVLLLSSKGAAGVTGSG, and IVLAATLSAVGHLPVAGLALI.

This sequence belongs to the dicarboxylate/amino acid:cation symporter (DAACS) (TC 2.A.23) family.

The protein resides in the cell inner membrane. Responsible for the transport of dicarboxylates such as succinate, fumarate, and malate from the periplasm across the membrane. This is C4-dicarboxylate transport protein from Pseudomonas fluorescens (strain SBW25).